Consider the following 458-residue polypeptide: tRNA modification GTPase MnmE (458 aa).

(6S)-5-formyl-5,6,7,8-tetrahydrofolate is bound by residues R32, E89, and K128. Positions 224–381 (GVRVVLAGRP…LCQRLKECAG (158 aa)) constitute a TrmE-type G domain. N234 serves as a coordination point for K(+). Residues 234–239 (NVGKSS), 253–259 (TDVPGTT), and 278–281 (DTAG) contribute to the GTP site. Mg(2+) is bound at residue S238. K(+) contacts are provided by T253, V255, and T258. Residue T259 participates in Mg(2+) binding. K458 provides a ligand contact to (6S)-5-formyl-5,6,7,8-tetrahydrofolate.

Belongs to the TRAFAC class TrmE-Era-EngA-EngB-Septin-like GTPase superfamily. TrmE GTPase family. As to quaternary structure, homodimer. Heterotetramer of two MnmE and two MnmG subunits. It depends on K(+) as a cofactor.

Its subcellular location is the cytoplasm. Its function is as follows. Exhibits a very high intrinsic GTPase hydrolysis rate. Involved in the addition of a carboxymethylaminomethyl (cmnm) group at the wobble position (U34) of certain tRNAs, forming tRNA-cmnm(5)s(2)U34. The protein is tRNA modification GTPase MnmE of Nitrosococcus oceani (strain ATCC 19707 / BCRC 17464 / JCM 30415 / NCIMB 11848 / C-107).